A 175-amino-acid polypeptide reads, in one-letter code: Peptide deformylase (175 aa).

Residues cysteine 96 and histidine 138 each contribute to the Fe cation site. The active site involves glutamate 139. Histidine 142 provides a ligand contact to Fe cation.

It belongs to the polypeptide deformylase family. Fe(2+) is required as a cofactor.

It carries out the reaction N-terminal N-formyl-L-methionyl-[peptide] + H2O = N-terminal L-methionyl-[peptide] + formate. Removes the formyl group from the N-terminal Met of newly synthesized proteins. Requires at least a dipeptide for an efficient rate of reaction. N-terminal L-methionine is a prerequisite for activity but the enzyme has broad specificity at other positions. In Helicobacter acinonychis (strain Sheeba), this protein is Peptide deformylase.